Here is a 258-residue protein sequence, read N- to C-terminus: Hydroxyacylglutathione hydrolase (258 aa).

Zn(2+) contacts are provided by H55, H57, D59, H60, H115, D132, and H170.

The protein belongs to the metallo-beta-lactamase superfamily. Glyoxalase II family. In terms of assembly, monomer. Zn(2+) serves as cofactor.

It catalyses the reaction an S-(2-hydroxyacyl)glutathione + H2O = a 2-hydroxy carboxylate + glutathione + H(+). Its pathway is secondary metabolite metabolism; methylglyoxal degradation; (R)-lactate from methylglyoxal: step 2/2. In terms of biological role, thiolesterase that catalyzes the hydrolysis of S-D-lactoyl-glutathione to form glutathione and D-lactic acid. In Shewanella halifaxensis (strain HAW-EB4), this protein is Hydroxyacylglutathione hydrolase.